The chain runs to 527 residues: Bifunctional purine biosynthesis protein PurH (527 aa).

The MGS-like domain occupies 1–149 (MTADLLPVRR…KNFARVAVAT (149 aa)).

Belongs to the PurH family.

It carries out the reaction (6R)-10-formyltetrahydrofolate + 5-amino-1-(5-phospho-beta-D-ribosyl)imidazole-4-carboxamide = 5-formamido-1-(5-phospho-D-ribosyl)imidazole-4-carboxamide + (6S)-5,6,7,8-tetrahydrofolate. The catalysed reaction is IMP + H2O = 5-formamido-1-(5-phospho-D-ribosyl)imidazole-4-carboxamide. The protein operates within purine metabolism; IMP biosynthesis via de novo pathway; 5-formamido-1-(5-phospho-D-ribosyl)imidazole-4-carboxamide from 5-amino-1-(5-phospho-D-ribosyl)imidazole-4-carboxamide (10-formyl THF route): step 1/1. It functions in the pathway purine metabolism; IMP biosynthesis via de novo pathway; IMP from 5-formamido-1-(5-phospho-D-ribosyl)imidazole-4-carboxamide: step 1/1. This is Bifunctional purine biosynthesis protein PurH from Stenotrophomonas maltophilia (strain K279a).